A 67-amino-acid polypeptide reads, in one-letter code: Large ribosomal subunit protein uL29 (67 aa).

Belongs to the universal ribosomal protein uL29 family.

This is Large ribosomal subunit protein uL29 from Pelotomaculum thermopropionicum (strain DSM 13744 / JCM 10971 / SI).